We begin with the raw amino-acid sequence, 189 residues long: Peroxiredoxin sll1621 (189 aa).

Positions 2-177 (TPERVPSVVF…MLAYLKGAEA (176 aa)) constitute a Thioredoxin domain. C55 acts as the Cysteine sulfenic acid (-SOH) intermediate (for peroxiredoxin activity) in catalysis.

The protein belongs to the peroxiredoxin family. Prx5 subfamily. As to quaternary structure, monomer.

It carries out the reaction a hydroperoxide + 2 glutathione = an alcohol + glutathione disulfide + H2O. Functionally, thiol-specific peroxidase that catalyzes the reduction of hydrogen peroxide and organic hydroperoxides to water and alcohols, respectively. Plays a role in cell protection against oxidative stress by detoxifying peroxides. The polypeptide is Peroxiredoxin sll1621 (Synechocystis sp. (strain ATCC 27184 / PCC 6803 / Kazusa)).